The following is a 78-amino-acid chain: Translation initiation factor IF-1 (78 aa).

One can recognise an S1-like domain in the interval 2 to 78 (SKNNLNETES…TRARITYRFK (77 aa)).

The protein belongs to the IF-1 family. In terms of assembly, component of the 30S ribosomal translation pre-initiation complex which assembles on the 30S ribosome in the order IF-2 and IF-3, IF-1 and N-formylmethionyl-tRNA(fMet); mRNA recruitment can occur at any time during PIC assembly.

It is found in the cytoplasm. Functionally, one of the essential components for the initiation of protein synthesis. Stabilizes the binding of IF-2 and IF-3 on the 30S subunit to which N-formylmethionyl-tRNA(fMet) subsequently binds. Helps modulate mRNA selection, yielding the 30S pre-initiation complex (PIC). Upon addition of the 50S ribosomal subunit IF-1, IF-2 and IF-3 are released leaving the mature 70S translation initiation complex. The chain is Translation initiation factor IF-1 from Onion yellows phytoplasma (strain OY-M).